A 240-amino-acid polypeptide reads, in one-letter code: Homeobox protein DLX-4 (240 aa).

2 disordered regions span residues 44 to 70 and 175 to 194; these read DLSY…DSYL and LKQS…PSLS. A DNA-binding region (homeobox) is located at residues 116–175; it reads LRKPRTIYSSLQLQHLNQRFQHTQYLALPERAQLAAQLGLTQTQVKIWFQNKRSKYKKLL.

The protein belongs to the distal-less homeobox family. As to expression, branchial arches, molar and incisor teeth and limbs.

Its subcellular location is the nucleus. May play a role in determining the production of hemoglobin S. May act as a repressor. During embryonic development, plays a role in palatogenesis. This is Homeobox protein DLX-4 (Dlx4) from Mus musculus (Mouse).